The sequence spans 1162 residues: Lysine-specific demethylase 2A (1162 aa).

Residue Ser-28 is modified to Phosphoserine. A JmjC domain is found at 148–316; the sequence is FSHTRLENMV…MQLKIYNIED (169 aa). Position 209 (Thr-209) interacts with substrate. 2 residues coordinate Fe cation: His-212 and Asp-214. Lys-229 is a substrate binding site. His-284 contacts Fe cation. The tract at residues 367–389 is disordered; the sequence is GLESGNGDEEAVDREPRRLSSRR. Residues Ser-390 and Ser-394 each carry the phosphoserine modification. A Glycyl lysine isopeptide (Lys-Gly) (interchain with G-Cter in SUMO2) cross-link involves residue Lys-505. The disordered stretch occupies residues 532–557; it reads VPTIPITKPHTMKPAPRLTPVRPAAA. Thr-550 carries the phosphothreonine modification. Phosphoserine is present on Ser-558. Residues 564-610 form a CXXC-type zinc finger; it reads ARRRRVRCRKCKACVQGECGVCHYCRDMKKFGGPGRMKQSCVLRQCL. Residues Cys-571, Cys-574, Cys-577, Cys-582, Cys-585, Cys-588, Cys-604, Cys-609, Cys-620, and Cys-623 each contribute to the Zn(2+) site. Residues 617–678 form a PHD-type zinc finger; sequence SVTCSLCGEV…CWECPKCYQE (62 aa). Thr-632 is modified (phosphothreonine). Zn(2+)-binding residues include Cys-642, Cys-645, His-650, Cys-653, Cys-672, and Cys-675. Ser-692 bears the Phosphoserine mark. The tract at residues 704 to 789 is disordered; sequence PLRSCDEPLT…PSGKKELSEV (86 aa). Phosphothreonine is present on Thr-713. Residues Ser-718 and Ser-731 each carry the phosphoserine modification. Basic and acidic residues-rich tracts occupy residues 746 to 757 and 771 to 789; these read SDHHSASRDERF and TMVR…LSEV. Residues Ser-825, Ser-832, Ser-869, and Ser-883 each carry the phosphoserine modification. Residues 839 to 887 form a disordered region; sequence HCPARTPQRGDEEGLGGEEEEEEEEEEEDDSAEEGGAARLNGRGSWAQD. Residues 851–871 show a composition bias toward acidic residues; it reads EGLGGEEEEEEEEEEEDDSAE. An F-box domain is found at 889–936; it reads DESWMQREVWMSVFRYLSRRELCECMRVCKTWYKWCCDKRLWTKIDLS. LRR repeat units lie at residues 961–982 and 984–1010; these read WTNI…LKDL and LAGC…DLRW. Arg-1020 bears the ADP-ribosylarginine mark. LRR repeat units lie at residues 1048 to 1073, 1074 to 1103, 1104 to 1128, and 1129 to 1156; these read GLDI…DLSH, CSHL…NMAG, CNKL…DLRG, and CKQI…SDEK.

The protein belongs to the JHDM1 histone demethylase family. In terms of assembly, interacts with CBX5/HP1A; the interaction promotes CBX5 localization to chromatin. The SKP1-KDM2A complex interacts with UBB. Part of a SCF (SKP1-cullin-F-box) protein ligase complex. Fe(2+) serves as cofactor. Post-translationally, mono-ADP-ribosylated at Arg-1020 in response to DNA damage, leading to displacement from chromatin, resulting in increased dimethylation of histone H3 at 'Lys-36'. Widely expressed, with highest levels in brain, testis and ovary, followed by lung.

The protein localises to the nucleus. The protein resides in the nucleoplasm. Its subcellular location is the chromosome. It catalyses the reaction N(6),N(6)-dimethyl-L-lysyl(36)-[histone H3] + 2 2-oxoglutarate + 2 O2 = L-lysyl(36)-[histone H3] + 2 formaldehyde + 2 succinate + 2 CO2. Histone demethylase that specifically demethylates 'Lys-36' of histone H3, thereby playing a central role in histone code. Preferentially demethylates dimethylated H3 'Lys-36' residue while it has weak or no activity for mono- and tri-methylated H3 'Lys-36'. May also recognize and bind to some phosphorylated proteins and promote their ubiquitination and degradation. Required to maintain the heterochromatic state. Associates with centromeres and represses transcription of small non-coding RNAs that are encoded by the clusters of satellite repeats at the centromere. Required to sustain centromeric integrity and genomic stability, particularly during mitosis. Regulates circadian gene expression by repressing the transcriptional activator activity of CLOCK-BMAL1 heterodimer and RORA in a catalytically-independent manner. The protein is Lysine-specific demethylase 2A (KDM2A) of Homo sapiens (Human).